A 518-amino-acid chain; its full sequence is E3 ubiquitin-protein ligase TRIM39 (518 aa).

An RING-type zinc finger spans residues 29-70 (CSVCLEYLKEPVIIECGHNFCKACITRWWEDLERDFPCPVCR). The B box-type zinc-finger motif lies at 102-143 (RDESLCPQHHEALSLFCYEDQEAVCLICAISHTHRAHTVVPL). Residues C107, H110, C129, and H135 each contribute to the Zn(2+) site. Residues 181–250 (ELKRLVESRR…AHLAAEVEGK (70 aa)) are a coiled coil. Interaction with CDKN1A stretches follow at residues 268–337 (KNIP…QLIA) and 389–518 (TSGR…TDWE). The B30.2/SPRY domain occupies 319–514 (SNFPRQYFAL…NAAPLTIRPP (196 aa)).

It belongs to the TRIM/RBCC family. As to quaternary structure, isoform 1 interacts with MOAP1. Isoform 1 and isoform 2 interact with CDKN1A. Isoform 2 interacts (via domain B box-type) with CACTIN. In terms of processing, autoubiquitinated. Ubiquitous; highly expressed in brain, heart, kidney, liver, skeletal muscle, spleen and testis.

The protein resides in the cytoplasm. Its subcellular location is the cytosol. It is found in the mitochondrion. The protein localises to the nucleus. It carries out the reaction S-ubiquitinyl-[E2 ubiquitin-conjugating enzyme]-L-cysteine + [acceptor protein]-L-lysine = [E2 ubiquitin-conjugating enzyme]-L-cysteine + N(6)-ubiquitinyl-[acceptor protein]-L-lysine.. The protein operates within protein modification; protein ubiquitination. Its function is as follows. E3 ubiquitin-protein ligase. May facilitate apoptosis by inhibiting APC/C-Cdh1-mediated poly-ubiquitination and subsequent proteasome-mediated degradation of the pro-apoptotic protein MOAP1. Regulates the G1/S transition of the cell cycle and DNA damage-induced G2 arrest by stabilizing CDKN1A/p21. Positively regulates CDKN1A/p21 stability by competing with DTL for CDKN1A/p21 binding, therefore disrupting DCX(DTL) E3 ubiquitin ligase complex-mediated CDKN1A/p21 ubiquitination and degradation. Regulates the G1/S transition of the cell cycle and DNA damage-induced G2 arrest by stabilizing CDKN1A/p21. Positively regulates CDKN1A/p21 stability by competing with DTL for CDKN1A/p21 binding, therefore disrupting DCX(DTL) E3 ubiquitin ligase complex-mediated CDKN1A/p21 ubiquitination and degradation. Negatively regulates the canonical NF-kappa-B signaling pathway via stabilization of CACTIN in an ubiquitination-independent manner. This Homo sapiens (Human) protein is E3 ubiquitin-protein ligase TRIM39 (TRIM39).